A 258-amino-acid polypeptide reads, in one-letter code: Acyl-[acyl-carrier-protein]--UDP-N-acetylglucosamine O-acyltransferase (258 aa).

Belongs to the transferase hexapeptide repeat family. LpxA subfamily. As to quaternary structure, homotrimer.

It localises to the cytoplasm. It carries out the reaction a (3R)-hydroxyacyl-[ACP] + UDP-N-acetyl-alpha-D-glucosamine = a UDP-3-O-[(3R)-3-hydroxyacyl]-N-acetyl-alpha-D-glucosamine + holo-[ACP]. The protein operates within glycolipid biosynthesis; lipid IV(A) biosynthesis; lipid IV(A) from (3R)-3-hydroxytetradecanoyl-[acyl-carrier-protein] and UDP-N-acetyl-alpha-D-glucosamine: step 1/6. In terms of biological role, involved in the biosynthesis of lipid A, a phosphorylated glycolipid that anchors the lipopolysaccharide to the outer membrane of the cell. This chain is Acyl-[acyl-carrier-protein]--UDP-N-acetylglucosamine O-acyltransferase, found in Neisseria meningitidis serogroup B (strain ATCC BAA-335 / MC58).